Reading from the N-terminus, the 93-residue chain is Putative pterin-4-alpha-carbinolamine dehydratase (93 aa).

This sequence belongs to the pterin-4-alpha-carbinolamine dehydratase family.

It carries out the reaction (4aS,6R)-4a-hydroxy-L-erythro-5,6,7,8-tetrahydrobiopterin = (6R)-L-erythro-6,7-dihydrobiopterin + H2O. This is Putative pterin-4-alpha-carbinolamine dehydratase from Thermomicrobium roseum (strain ATCC 27502 / DSM 5159 / P-2).